The sequence spans 239 residues: Methylthioribulose-1-phosphate dehydratase (239 aa).

Residue cysteine 94 participates in substrate binding. Positions 112 and 114 each coordinate Zn(2+). Glutamate 136 functions as the Proton donor/acceptor in the catalytic mechanism. Zn(2+) is bound at residue histidine 192.

Belongs to the aldolase class II family. MtnB subfamily. Requires Zn(2+) as cofactor.

The protein resides in the cytoplasm. It carries out the reaction 5-(methylsulfanyl)-D-ribulose 1-phosphate = 5-methylsulfanyl-2,3-dioxopentyl phosphate + H2O. The protein operates within amino-acid biosynthesis; L-methionine biosynthesis via salvage pathway; L-methionine from S-methyl-5-thio-alpha-D-ribose 1-phosphate: step 2/6. In terms of biological role, catalyzes the dehydration of methylthioribulose-1-phosphate (MTRu-1-P) into 2,3-diketo-5-methylthiopentyl-1-phosphate (DK-MTP-1-P). Functions in the methionine salvage pathway. May play a role in apoptosis. This chain is Methylthioribulose-1-phosphate dehydratase, found in Aquarana catesbeiana (American bullfrog).